A 496-amino-acid polypeptide reads, in one-letter code: Probable cytosol aminopeptidase (496 aa).

Positions 267 and 272 each coordinate Mn(2+). The active site involves K279. Residues D290, D349, and E351 each coordinate Mn(2+). The active site involves R353.

This sequence belongs to the peptidase M17 family. It depends on Mn(2+) as a cofactor.

It localises to the cytoplasm. It carries out the reaction Release of an N-terminal amino acid, Xaa-|-Yaa-, in which Xaa is preferably Leu, but may be other amino acids including Pro although not Arg or Lys, and Yaa may be Pro. Amino acid amides and methyl esters are also readily hydrolyzed, but rates on arylamides are exceedingly low.. It catalyses the reaction Release of an N-terminal amino acid, preferentially leucine, but not glutamic or aspartic acids.. Its function is as follows. Presumably involved in the processing and regular turnover of intracellular proteins. Catalyzes the removal of unsubstituted N-terminal amino acids from various peptides. The protein is Probable cytosol aminopeptidase of Methylobacillus flagellatus (strain ATCC 51484 / DSM 6875 / VKM B-1610 / KT).